Reading from the N-terminus, the 256-residue chain is Imidazole glycerol phosphate synthase subunit HisF (256 aa).

Catalysis depends on residues aspartate 11 and aspartate 130.

Belongs to the HisA/HisF family. Heterodimer of HisH and HisF.

It is found in the cytoplasm. The catalysed reaction is 5-[(5-phospho-1-deoxy-D-ribulos-1-ylimino)methylamino]-1-(5-phospho-beta-D-ribosyl)imidazole-4-carboxamide + L-glutamine = D-erythro-1-(imidazol-4-yl)glycerol 3-phosphate + 5-amino-1-(5-phospho-beta-D-ribosyl)imidazole-4-carboxamide + L-glutamate + H(+). Its pathway is amino-acid biosynthesis; L-histidine biosynthesis; L-histidine from 5-phospho-alpha-D-ribose 1-diphosphate: step 5/9. IGPS catalyzes the conversion of PRFAR and glutamine to IGP, AICAR and glutamate. The HisF subunit catalyzes the cyclization activity that produces IGP and AICAR from PRFAR using the ammonia provided by the HisH subunit. This chain is Imidazole glycerol phosphate synthase subunit HisF, found in Prochlorococcus marinus (strain MIT 9301).